A 537-amino-acid chain; its full sequence is ESX-2 secretion system protein EccE2 (537 aa).

The chain crosses the membrane as a helical span at residues 31–51; that stretch reads ALGGQLGAVMAVVVGVALVFV.

The protein belongs to the EccE family. As to quaternary structure, could be part of the ESX-2 / type VII secretion system (T7SS), which is composed of cytosolic and membrane components.

It localises to the cell membrane. The chain is ESX-2 secretion system protein EccE2 (eccE2) from Mycobacterium tuberculosis (strain CDC 1551 / Oshkosh).